Here is a 180-residue protein sequence, read N- to C-terminus: ATP-dependent protease subunit HslV (180 aa).

Residue T2 is part of the active site. The Na(+) site is built by G157, C160, and S163.

The protein belongs to the peptidase T1B family. HslV subfamily. A double ring-shaped homohexamer of HslV is capped on each side by a ring-shaped HslU homohexamer. The assembly of the HslU/HslV complex is dependent on binding of ATP.

It localises to the cytoplasm. It catalyses the reaction ATP-dependent cleavage of peptide bonds with broad specificity.. Allosterically activated by HslU binding. Functionally, protease subunit of a proteasome-like degradation complex believed to be a general protein degrading machinery. The polypeptide is ATP-dependent protease subunit HslV (Wigglesworthia glossinidia brevipalpis).